The sequence spans 580 residues: Protein O-linked-mannose beta-1,4-N-acetylglucosaminyltransferase 2 (580 aa).

At 1-4 the chain is on the cytoplasmic side; the sequence is MHLS. Residues 5-25 form a helical; Signal-anchor for type II membrane protein membrane-spanning segment; sequence AVFNALLVSVLAAVLWKHVRL. Residues 26-580 lie on the Lumenal side of the membrane; the sequence is REHAATLEEE…PFADVLVCNT (555 aa). Asn99 and Asn276 each carry an N-linked (GlcNAc...) asparagine glycan. Residues 488-580 enclose the Fibronectin type-III domain; it reads ARCQASVHGA…PFADVLVCNT (93 aa).

It belongs to the glycosyltransferase 61 family. As to expression, highly expressed in the brain, muscle, heart, and kidney in both fetus and adult. In the brain, highest expression in the cortex and cerebellum. Highly expressed in the pancreas.

Its subcellular location is the endoplasmic reticulum membrane. It catalyses the reaction 3-O-(alpha-D-mannosyl)-L-threonyl-[protein] + UDP-N-acetyl-alpha-D-glucosamine = 3-O-(N-acetyl-beta-D-glucosaminyl-(1-&gt;4)-alpha-D-mannosyl)-L-threonyl-[protein] + UDP + H(+). It participates in protein modification; protein glycosylation. In terms of biological role, O-linked mannose beta-1,4-N-acetylglucosaminyltransferase that transfers UDP-N-acetyl-D-glucosamine to the 4-position of the mannose to generate N-acetyl-D-glucosamine-beta-1,4-O-D-mannosylprotein. Involved in the biosynthesis of the phosphorylated O-mannosyl trisaccharide (N-acetylgalactosamine-beta-3-N-acetylglucosamine-beta-4-(phosphate-6-)mannose), a carbohydrate structure present in alpha-dystroglycan (DAG1), which is required for binding laminin G-like domain-containing extracellular proteins with high affinity. This chain is Protein O-linked-mannose beta-1,4-N-acetylglucosaminyltransferase 2 (POMGNT2), found in Homo sapiens (Human).